The sequence spans 84 residues: Cytochrome b559 subunit alpha (84 aa).

The helical transmembrane segment at 24–38 threads the bilayer; sequence IIHAVTLPAIFIAGF. His-26 is a binding site for heme.

It belongs to the PsbE/PsbF family. In terms of assembly, heterodimer of an alpha subunit and a beta subunit. PSII is composed of 1 copy each of membrane proteins PsbA, PsbB, PsbC, PsbD, PsbE, PsbF, PsbH, PsbI, PsbJ, PsbK, PsbL, PsbM, PsbT, PsbX, PsbY, Psb30/Ycf12, peripheral proteins PsbO, CyanoQ (PsbQ), PsbU, PsbV and a large number of cofactors. It forms dimeric complexes. The cofactor is heme b.

It localises to the cellular thylakoid membrane. This b-type cytochrome is tightly associated with the reaction center of photosystem II (PSII). PSII is a light-driven water:plastoquinone oxidoreductase that uses light energy to abstract electrons from H(2)O, generating O(2) and a proton gradient subsequently used for ATP formation. It consists of a core antenna complex that captures photons, and an electron transfer chain that converts photonic excitation into a charge separation. The protein is Cytochrome b559 subunit alpha of Prochlorococcus marinus (strain MIT 9301).